The chain runs to 1028 residues: Serine/threonine-protein kinase fray2 (1028 aa).

The disordered stretch occupies residues Met1–Ser67. The segment covering Lys20 to Ser54 has biased composition (low complexity). Positions Tyr71–Phe330 constitute a Protein kinase domain. Residues Ile77–Val85 and Lys100 each bind ATP. Catalysis depends on Asp195, which acts as the Proton acceptor. A Phosphothreonine; by autocatalysis modification is found at Thr230. A compositionally biased stretch (polar residues) spans Thr368–Ala381. Disordered regions lie at residues Thr368 to Val467, Ala486 to Pro561, and Asp580 to Lys914. Composition is skewed to low complexity over residues Pro387–Asn419 and Thr432–Thr458. 2 stretches are compositionally biased toward polar residues: residues Ile503–Ser518 and Ile528–Asn542. Residues Thr543 to Pro561 are compositionally biased toward low complexity. Polar residues predominate over residues Ile595–Leu616. 2 stretches are compositionally biased toward low complexity: residues Gln617–Asn642 and Ser683–Ser700. Basic and acidic residues-rich tracts occupy residues Ser701–Lys714, Ser728–Asn742, Val753–Arg855, and Ser865–Ser893.

It belongs to the protein kinase superfamily. STE Ser/Thr protein kinase family. STE20 subfamily. Mn(2+) is required as a cofactor. Post-translationally, undergoes autophosphorylation in the catalytic domain.

It carries out the reaction L-seryl-[protein] + ATP = O-phospho-L-seryl-[protein] + ADP + H(+). It catalyses the reaction L-threonyl-[protein] + ATP = O-phospho-L-threonyl-[protein] + ADP + H(+). This chain is Serine/threonine-protein kinase fray2, found in Dictyostelium discoideum (Social amoeba).